The primary structure comprises 61 residues: Small ribosomal subunit protein uS14 (61 aa).

Residues Cys24, Cys27, Cys40, and Cys43 each coordinate Zn(2+).

Belongs to the universal ribosomal protein uS14 family. Zinc-binding uS14 subfamily. As to quaternary structure, part of the 30S ribosomal subunit. Contacts proteins S3 and S10. It depends on Zn(2+) as a cofactor.

Functionally, binds 16S rRNA, required for the assembly of 30S particles and may also be responsible for determining the conformation of the 16S rRNA at the A site. This is Small ribosomal subunit protein uS14 from Clostridium kluyveri (strain NBRC 12016).